Consider the following 177-residue polypeptide: ATP synthase subunit delta (177 aa).

It belongs to the ATPase delta chain family. F-type ATPases have 2 components, F(1) - the catalytic core - and F(0) - the membrane proton channel. F(1) has five subunits: alpha(3), beta(3), gamma(1), delta(1), epsilon(1). F(0) has three main subunits: a(1), b(2) and c(10-14). The alpha and beta chains form an alternating ring which encloses part of the gamma chain. F(1) is attached to F(0) by a central stalk formed by the gamma and epsilon chains, while a peripheral stalk is formed by the delta and b chains.

Its subcellular location is the cell inner membrane. F(1)F(0) ATP synthase produces ATP from ADP in the presence of a proton or sodium gradient. F-type ATPases consist of two structural domains, F(1) containing the extramembraneous catalytic core and F(0) containing the membrane proton channel, linked together by a central stalk and a peripheral stalk. During catalysis, ATP synthesis in the catalytic domain of F(1) is coupled via a rotary mechanism of the central stalk subunits to proton translocation. Its function is as follows. This protein is part of the stalk that links CF(0) to CF(1). It either transmits conformational changes from CF(0) to CF(1) or is implicated in proton conduction. In Actinobacillus pleuropneumoniae serotype 7 (strain AP76), this protein is ATP synthase subunit delta.